Here is an 83-residue protein sequence, read N- to C-terminus: Disintegrin isoform D-3 (83 aa).

Residues 2–83 (PPVCGNELLE…GKSSDCPWNH (82 aa)) enclose the Disintegrin domain. Disulfide bonds link Cys5-Cys24, Cys16-Cys34, Cys18-Cys29, Cys28-Cys51, Cys42-Cys48, Cys47-Cys72, and Cys60-Cys79. The short motif at 64–66 (RGD) is the Cell attachment site element.

The protein belongs to the venom metalloproteinase (M12B) family. P-II subfamily. P-IIa sub-subfamily. As to quaternary structure, monomer (disintegrin). As to expression, expressed by the venom gland.

The protein resides in the secreted. Its function is as follows. Inhibits fibrinogen interaction with platelets. Acts by binding to alpha-IIb/beta-3 (ITGA2B/ITGB3) on the platelet surface and inhibits aggregation induced by ADP, thrombin, platelet-activating factor and collagen. This Bitis arietans (African puff adder) protein is Disintegrin isoform D-3.